The primary structure comprises 220 residues: Thiopurine S-methyltransferase (220 aa).

Residues tryptophan 10, leucine 45, glutamate 66, and arginine 123 each coordinate S-adenosyl-L-methionine.

The protein belongs to the class I-like SAM-binding methyltransferase superfamily. TPMT family.

The protein localises to the cytoplasm. The catalysed reaction is S-adenosyl-L-methionine + a thiopurine = S-adenosyl-L-homocysteine + a thiopurine S-methylether.. In Nitrosospira multiformis (strain ATCC 25196 / NCIMB 11849 / C 71), this protein is Thiopurine S-methyltransferase.